The following is a 346-amino-acid chain: MARHPRWTLSQVTELFEKPLLELLFEAQQIHRQHFDPQQVQVSTLLSIKTGACPEDCKYCPQSSRYKTGLEAERLMEVEQVLDSARKAKNAGSTRFCMGAAWKNPHERDMPYLEKIVQGVKAMGLETCMTLGMLNESQAQRLANAGLDYYNHNLDTSPEFYGNIITTRTYQERLDTLEKVREAGIKVCSGGIVGLGETVTDRAGLLLQLANLPTPPESVPINMLVKVKGTPLADNDDVDAFDFIRTIAVARIMMPTSYVRLSAGREQMNEQTQAMCFMAGANSIFYGCKLLTTPNPAEDKDLQLFRKLGLNPQQTRVLAGDNEQQQRLEQTLMTPDTDDYYNAAAL.

A Radical SAM core domain is found at 38 to 256; it reads QQVQVSTLLS…IAVARIMMPT (219 aa). [4Fe-4S] cluster-binding residues include Cys-53, Cys-57, and Cys-60. Cys-97, Cys-128, Cys-188, and Arg-260 together coordinate [2Fe-2S] cluster.

This sequence belongs to the radical SAM superfamily. Biotin synthase family. In terms of assembly, homodimer. Requires [4Fe-4S] cluster as cofactor. The cofactor is [2Fe-2S] cluster.

The enzyme catalyses (4R,5S)-dethiobiotin + (sulfur carrier)-SH + 2 reduced [2Fe-2S]-[ferredoxin] + 2 S-adenosyl-L-methionine = (sulfur carrier)-H + biotin + 2 5'-deoxyadenosine + 2 L-methionine + 2 oxidized [2Fe-2S]-[ferredoxin]. The protein operates within cofactor biosynthesis; biotin biosynthesis; biotin from 7,8-diaminononanoate: step 2/2. Catalyzes the conversion of dethiobiotin (DTB) to biotin by the insertion of a sulfur atom into dethiobiotin via a radical-based mechanism. This is Biotin synthase from Salmonella agona (strain SL483).